The chain runs to 201 residues: Putative ankyrin repeat protein R868 (201 aa).

ANK repeat units follow at residues 125 to 154 (YENNALNWASKYGFLEIVKLIMENKINCYF) and 156 to 188 (KAKKAYQLAITYGHTDVVDFLKTYVNTNSDYNF).

This chain is Putative ankyrin repeat protein R868, found in Acanthamoeba polyphaga (Amoeba).